Consider the following 115-residue polypeptide: Probable non-functional immunoglobulin heavy variable 8-51-1 (115 aa).

The first 17 residues, 1-17 (MLVCVLLYSFRLFGIQG), serve as a signal peptide directing secretion. Residues 18–42 (EAQLTESGGDLVHLEGPLRLSCAAS) are framework-1. In terms of domain architecture, Ig-like spans 19–115 (AQLTESGGDL…QNMAAFNCAG (97 aa)). Residues 43–50 (WFTFSIYE) are complementarity-determining-1. Positions 51-67 (IHWVCQASGKGLEWVAV) are framework-2. Residues Cys-55 and Cys-113 are joined by a disulfide bond. The complementarity-determining-2 stretch occupies residues 68-75 (IWRGESHQ). Positions 76-113 (YNADYVRGRLTTSRDNTKYMLYMQMISLRTQNMAAFNC) are framework-3. The complementarity-determining-3 stretch occupies residues 114–115 (AG).

Immunoglobulins are composed of two identical heavy chains and two identical light chains; disulfide-linked.

Its subcellular location is the secreted. It is found in the cell membrane. Probable non-functional open reading frame (ORF) of V region of the variable domain of immunoglobulin heavy chains. Non-functional ORF generally cannot participate in the synthesis of a productive immunoglobulin chain due to altered V-(D)-J or switch recombination and/or splicing site (at mRNA level) and/or conserved amino acid change (protein level). Immunoglobulins, also known as antibodies, are membrane-bound or secreted glycoproteins produced by B lymphocytes. In the recognition phase of humoral immunity, the membrane-bound immunoglobulins serve as receptors which, upon binding of a specific antigen, trigger the clonal expansion and differentiation of B lymphocytes into immunoglobulins-secreting plasma cells. Secreted immunoglobulins mediate the effector phase of humoral immunity, which results in the elimination of bound antigens. The antigen binding site is formed by the variable domain of one heavy chain, together with that of its associated light chain. Thus, each immunoglobulin has two antigen binding sites with remarkable affinity for a particular antigen. The variable domains are assembled by a process called V-(D)-J rearrangement and can then be subjected to somatic hypermutations which, after exposure to antigen and selection, allow affinity maturation for a particular antigen. In Homo sapiens (Human), this protein is Probable non-functional immunoglobulin heavy variable 8-51-1.